The primary structure comprises 310 residues: Protein translocase subunit SecF (310 aa).

6 helical membrane-spanning segments follow: residues F20–Y42, I140–V160, W164–F184, L194–I214, I246–A266, and V272–I292.

It belongs to the SecD/SecF family. SecF subfamily. Forms a complex with SecD. Part of the essential Sec protein translocation apparatus which comprises SecA, SecYEG and auxiliary proteins SecDF-YajC and YidC.

The protein localises to the cell inner membrane. In terms of biological role, part of the Sec protein translocase complex. Interacts with the SecYEG preprotein conducting channel. SecDF uses the proton motive force (PMF) to complete protein translocation after the ATP-dependent function of SecA. In Rickettsia canadensis (strain McKiel), this protein is Protein translocase subunit SecF.